We begin with the raw amino-acid sequence, 803 residues long: Phosphoribosylformylglycinamidine synthase subunit PurL (803 aa).

His65 is an active-site residue. The ATP site is built by Tyr68 and Lys107. Glu109 contacts Mg(2+). Residues Ser110 to His113 and Arg132 contribute to the substrate site. The Proton acceptor role is filled by His111. Asp133 is a Mg(2+) binding site. Gln256 is a substrate binding site. Residue Asp284 coordinates Mg(2+). Glu328–Gln330 is a binding site for substrate. 2 residues coordinate ATP: Asn537 and Gly574. Asn575 contacts Mg(2+). Ser577 serves as a coordination point for substrate.

The protein belongs to the FGAMS family. Monomer. Part of the FGAM synthase complex composed of 1 PurL, 1 PurQ and 2 PurS subunits.

It is found in the cytoplasm. The catalysed reaction is N(2)-formyl-N(1)-(5-phospho-beta-D-ribosyl)glycinamide + L-glutamine + ATP + H2O = 2-formamido-N(1)-(5-O-phospho-beta-D-ribosyl)acetamidine + L-glutamate + ADP + phosphate + H(+). It participates in purine metabolism; IMP biosynthesis via de novo pathway; 5-amino-1-(5-phospho-D-ribosyl)imidazole from N(2)-formyl-N(1)-(5-phospho-D-ribosyl)glycinamide: step 1/2. Its function is as follows. Part of the phosphoribosylformylglycinamidine synthase complex involved in the purines biosynthetic pathway. Catalyzes the ATP-dependent conversion of formylglycinamide ribonucleotide (FGAR) and glutamine to yield formylglycinamidine ribonucleotide (FGAM) and glutamate. The FGAM synthase complex is composed of three subunits. PurQ produces an ammonia molecule by converting glutamine to glutamate. PurL transfers the ammonia molecule to FGAR to form FGAM in an ATP-dependent manner. PurS interacts with PurQ and PurL and is thought to assist in the transfer of the ammonia molecule from PurQ to PurL. This chain is Phosphoribosylformylglycinamidine synthase subunit PurL, found in Prochlorococcus marinus (strain NATL2A).